Consider the following 287-residue polypeptide: MEGKEEDVRLGANKFSERHAIGTAAQGTDDKDYKEPPPAPLFEPGELKSWSFYRPGIAEFVATFLFLYISILTVMGVSKSTSKCATVGIQGIAWSFGGMILALVYCTAGISGHINPAVTFGLFLARKLSLTRAVFYIIMQCLGAICGRGVVKGFQQGLYMGNGGRRNVVAPGYTKGDGLGAEIVGTFILVYTVFSATDAKRRARDSHVPILAPLPIGFAVFLVHLATMGITGTGINPARSLGAAVIYNQHHAWADHWIFWVGPFIGAALAAIYHQVIIRAIPFKSRS.

2 helical membrane-spanning segments follow: residues 57-77 and 92-114; these read IAEF…VMGV and IAWS…SGHI. Residues 115-117 carry the NPA 1 motif; that stretch reads NPA. The next 3 helical transmembrane spans lie at 134 to 154, 176 to 196, and 210 to 230; these read VFYI…VKGF, GDGL…VFSA, and ILAP…TMGI. The NPA 2 motif lies at 236-238; the sequence is NPA. The helical transmembrane segment at 258-278 threads the bilayer; that stretch reads IFWVGPFIGAALAAIYHQVII.

This sequence belongs to the MIP/aquaporin (TC 1.A.8) family. PIP (TC 1.A.8.11) subfamily. As to quaternary structure, may interact with PIP1-2 to form heteromers. Highly expressed in roots, shoots and developing tassels, and at lower levels in leaves.

The protein localises to the cell membrane. Water channel required to facilitate the transport of water across cell membrane. Active as heteromers with PIP1-2, but not as homomers. This is Aquaporin PIP1-1 (PIP1-1) from Zea mays (Maize).